The sequence spans 437 residues: Vasoactive intestinal polypeptide receptor 2 (437 aa).

An N-terminal signal peptide occupies residues 1–22 (MRASVVLTCYCWLLVRVSSIHP). At 23–123 (ECRFHLEIQE…EDESKITFYI (101 aa)) the chain is on the extracellular side. Disulfide bonds link Cys-37–Cys-60, Cys-51–Cys-92, and Cys-74–Cys-108. Asn-57, Asn-87, and Asn-91 each carry an N-linked (GlcNAc...) asparagine glycan. A helical transmembrane segment spans residues 124–149 (LVKAIYTLGYSVSLMSLTTGSIIICL). Residues 150 to 157 (FRKLHCTR) are Cytoplasmic-facing. The helical transmembrane segment at 158–179 (NYIHLNLFLSFMLRAISVLVKD) threads the bilayer. Over 180 to 202 (SVLYSSSGTLRCHDQPGSWVGCK) the chain is Extracellular. Cys-201 and Cys-270 form a disulfide bridge. The chain crosses the membrane as a helical span at residues 203-227 (LSLVFFQYCIMANFYWLLVEGLYLH). At 228–238 (TLLVAILPPSR) the chain is on the cytoplasmic side. Residues 239-260 (CFLAYLLIGWGIPSVCIGAWIA) form a helical membrane-spanning segment. Over 261 to 279 (TRLSLEDTGCWDTNDHSIP) the chain is Extracellular. Residues 280 to 303 (WWVIRMPILISIVVNFALFISIVR) traverse the membrane as a helical segment. At 304–324 (ILLQKLTSPDVGGNDQSQYKR) the chain is on the cytoplasmic side. The helical transmembrane segment at 325 to 345 (LAKSTLLLIPLFGVHYMVFAA) threads the bilayer. Topologically, residues 346–353 (FPIGISST) are extracellular. Residues 354 to 377 (YQILFELCVGSFQGLVVAVLYCFL) form a helical membrane-spanning segment. Topologically, residues 378–437 (NSEVQCELKRRWRGLCLTQPGSRDYRLHSWSMSRNGSESALQIHRGSRTQSFLQSETSVI) are cytoplasmic.

It belongs to the G-protein coupled receptor 2 family. Interacts with ADCYAP1/PACAP (via N-terminal extracellular domain); activated by PACAP27 and CAPAC38 neuropeptides. Interacts with VIP; the interaction results in VIPR1 activation. As to expression, mainly in the thalamus, hippocampus and in the suprachiasmatic nucleus.

It localises to the cell membrane. In terms of biological role, g protein-coupled receptor activated by the neuropeptides vasoactive intestinal peptide (VIP) and pituitary adenylate cyclase-activating polypeptide (ADCYAP1/PACAP). Binds VIP and both PACAP27 and PACAP38 bioactive peptides with the order of ligand affinity of VIP = PACAP38 &gt; PACAP27. Ligand binding causes a conformation change that triggers signaling via guanine nucleotide-binding proteins (G proteins) and modulates the activity of downstream effectors. Activates cAMP-dependent pathway. May be coupled to phospholipase C. This is Vasoactive intestinal polypeptide receptor 2 from Rattus norvegicus (Rat).